The following is a 678-amino-acid chain: Protein MALE DISCOVERER 2 (678 aa).

The signal sequence occupies residues 1–25 (MMGCGFHFPWFFFLIIGLQAPLSLS). Residues 26–323 (LTSQGSALLK…SKGSKHVWLY (298 aa)) lie on the Extracellular side of the membrane. Asn52 carries N-linked (GlcNAc...) asparagine glycosylation. 4 LRR repeats span residues 71 to 94 (KVQILDLSGYSLEGTLAPELSQLS), 95 to 117 (DLRSLILSRNHFSGGIPKEYGSF), 119 to 141 (NLEVLDLRENDLSGQIPPELSNG), and 143 to 164 (SLKHLLLSGNKFSDDMRIKIVR). Residues 247-314 (LAAEPAPSAP…KNQPQDNKQS (68 aa)) are disordered. The span at 296 to 311 (KGSTSPDISKNQPQDN) shows a compositional bias: polar residues. Residues 324–344 (VVIAVASFVGLLIIVAVIFFC) form a helical membrane-spanning segment. Over 345–678 (RKRAVKSIGP…ELEILSSEAT (334 aa)) the chain is Cytoplasmic. The 306-residue stretch at 346–651 (KRAVKSIGPW…DVAEQLKQVI (306 aa)) folds into the Protein kinase domain.

This sequence belongs to the protein kinase superfamily. Ser/Thr protein kinase family. In terms of tissue distribution, expressed in pollen tubes and seedlings.

It is found in the endomembrane system. It catalyses the reaction L-seryl-[protein] + ATP = O-phospho-L-seryl-[protein] + ADP + H(+). The catalysed reaction is L-threonyl-[protein] + ATP = O-phospho-L-threonyl-[protein] + ADP + H(+). Functionally, involved in the pollen tube perception of the female signal by binding an unidentified female attractant. May be involved in the regulation of root hairs development. The sequence is that of Protein MALE DISCOVERER 2 (MDIS2) from Arabidopsis thaliana (Mouse-ear cress).